The chain runs to 357 residues: O-methyltransferase 9 (357 aa).

The S-adenosyl-L-methionine site is built by G200, D224, N249, F250, and K263. H267 (proton acceptor) is an active-site residue.

The protein belongs to the class I-like SAM-binding methyltransferase superfamily. Cation-independent O-methyltransferase family. COMT subfamily.

The catalysed reaction is (3,5-dichloro-2,4,6-trihydroxyphenyl)hexan-1-one + S-adenosyl-L-methionine = 1-(3,5-dichloro-2,6-dihydroxy-4-methoxyphenyl)hexan-1-one + S-adenosyl-L-homocysteine + H(+). The chain is O-methyltransferase 9 (omt9) from Dictyostelium discoideum (Social amoeba).